The primary structure comprises 517 residues: Ribonuclease Y (517 aa).

A helical transmembrane segment spans residues 1–21; sequence MIEFLIGLIAAVVGILVGYLI. The region spanning 207–271 is the KH domain; the sequence is LINVVNIKND…IAVRTVELLV (65 aa). The HD domain maps to 333 to 426; the sequence is ALIHSLEVAH…VCTADVLSAA (94 aa).

The protein belongs to the RNase Y family.

Its subcellular location is the cell membrane. Its function is as follows. Endoribonuclease that initiates mRNA decay. The polypeptide is Ribonuclease Y (Campylobacter hominis (strain ATCC BAA-381 / DSM 21671 / CCUG 45161 / LMG 19568 / NCTC 13146 / CH001A)).